A 282-amino-acid chain; its full sequence is Putative 1-acyl-sn-glycerol-3-phosphate acyltransferase acl-2 (282 aa).

The next 2 helical transmembrane spans lie at 4 to 24 (FWSI…NIST) and 32 to 52 (ISFY…TMIP). The HXXXXD motif signature appears at 98-103 (HQSSLD). The helical transmembrane segment at 122-142 (ILAYVPFFNLGAYFSNTIFID) threads the bilayer.

It belongs to the 1-acyl-sn-glycerol-3-phosphate acyltransferase family.

Its subcellular location is the membrane. The enzyme catalyses a 1-acyl-sn-glycero-3-phosphate + an acyl-CoA = a 1,2-diacyl-sn-glycero-3-phosphate + CoA. The protein operates within phospholipid metabolism; CDP-diacylglycerol biosynthesis; CDP-diacylglycerol from sn-glycerol 3-phosphate: step 2/3. Its function is as follows. Converts lysophosphatidic acid (LPA) into phosphatidic acid by incorporating an acyl moiety at the sn-2 position of the glycerol backbone. This is Putative 1-acyl-sn-glycerol-3-phosphate acyltransferase acl-2 (acl-2) from Caenorhabditis elegans.